Here is a 141-residue protein sequence, read N- to C-terminus: Transcription antitermination protein NusB (141 aa).

The protein belongs to the NusB family.

Involved in transcription antitermination. Required for transcription of ribosomal RNA (rRNA) genes. Binds specifically to the boxA antiterminator sequence of the ribosomal RNA (rrn) operons. This chain is Transcription antitermination protein NusB, found in Clostridium botulinum (strain Loch Maree / Type A3).